The sequence spans 359 residues: Phospho-N-acetylmuramoyl-pentapeptide-transferase (359 aa).

10 helical membrane passes run 3–23 (QIIIAAGIAILVSIMLTPVLI), 55–75 (VAILAGMWAGYFGSHLVGIAF), 84–104 (GLLVLALATMLGGVGFIDDFI), 117–137 (TSKTVGQILSALVFGVLVLQF), 156–176 (IATVAMPAAIFVLFCVILVMS), 187–207 (LDGLAGGCMAMVTGAYVIVTF), 231–251 (LAVIAAATAGACIGFLWWNAA), 255–275 (IFMGDTGSLALGGVIAGLSVT), 280–300 (LLAVVLGALFVAEIVSVVLQI), and 334–354 (FWLLTAIACGLGLALFYGEWL).

This sequence belongs to the glycosyltransferase 4 family. MraY subfamily. Mg(2+) serves as cofactor.

Its subcellular location is the cell membrane. The catalysed reaction is UDP-N-acetyl-alpha-D-muramoyl-L-alanyl-gamma-D-glutamyl-meso-2,6-diaminopimeloyl-D-alanyl-D-alanine + di-trans,octa-cis-undecaprenyl phosphate = di-trans,octa-cis-undecaprenyl diphospho-N-acetyl-alpha-D-muramoyl-L-alanyl-D-glutamyl-meso-2,6-diaminopimeloyl-D-alanyl-D-alanine + UMP. The protein operates within cell wall biogenesis; peptidoglycan biosynthesis. Its function is as follows. Catalyzes the initial step of the lipid cycle reactions in the biosynthesis of the cell wall peptidoglycan: transfers peptidoglycan precursor phospho-MurNAc-pentapeptide from UDP-MurNAc-pentapeptide onto the lipid carrier undecaprenyl phosphate, yielding undecaprenyl-pyrophosphoryl-MurNAc-pentapeptide, known as lipid I. The sequence is that of Phospho-N-acetylmuramoyl-pentapeptide-transferase from Mycobacteroides abscessus (strain ATCC 19977 / DSM 44196 / CCUG 20993 / CIP 104536 / JCM 13569 / NCTC 13031 / TMC 1543 / L948) (Mycobacterium abscessus).